The primary structure comprises 454 residues: tRNA-2-methylthio-N(6)-dimethylallyladenosine synthase (454 aa).

Positions 6–122 constitute an MTTase N-terminal domain; that stretch reads RRYHITTYGC…LQDLLEQVAS (117 aa). Positions 15, 51, 85, 157, 161, and 164 each coordinate [4Fe-4S] cluster. The Radical SAM core domain occupies 143–384; sequence RDSAVTAWVN…GVCAELRSQR (242 aa). One can recognise a TRAM domain in the interval 383-447; sequence QRYANRIEEV…SFSLTGEPLS (65 aa).

It belongs to the methylthiotransferase family. MiaB subfamily. Monomer. [4Fe-4S] cluster serves as cofactor.

The protein resides in the cytoplasm. It catalyses the reaction N(6)-dimethylallyladenosine(37) in tRNA + (sulfur carrier)-SH + AH2 + 2 S-adenosyl-L-methionine = 2-methylsulfanyl-N(6)-dimethylallyladenosine(37) in tRNA + (sulfur carrier)-H + 5'-deoxyadenosine + L-methionine + A + S-adenosyl-L-homocysteine + 2 H(+). Catalyzes the methylthiolation of N6-(dimethylallyl)adenosine (i(6)A), leading to the formation of 2-methylthio-N6-(dimethylallyl)adenosine (ms(2)i(6)A) at position 37 in tRNAs that read codons beginning with uridine. The protein is tRNA-2-methylthio-N(6)-dimethylallyladenosine synthase of Acaryochloris marina (strain MBIC 11017).